The following is a 139-amino-acid chain: Putative pre-16S rRNA nuclease (139 aa).

The protein belongs to the YqgF nuclease family.

Its subcellular location is the cytoplasm. In terms of biological role, could be a nuclease involved in processing of the 5'-end of pre-16S rRNA. This Streptococcus equi subsp. equi (strain 4047) protein is Putative pre-16S rRNA nuclease.